A 245-amino-acid polypeptide reads, in one-letter code: Endo-chitosanase (245 aa).

Positions methionine 1–alanine 17 are cleaved as a signal peptide.

It belongs to the glycosyl hydrolase 75 family.

Its subcellular location is the secreted. The catalysed reaction is Endohydrolysis of beta-(1-&gt;4)-linkages between D-glucosamine residues in a partly acetylated chitosan.. In terms of biological role, chitosanase catalyzing the endo-type cleavage of chitosan, the deacylated form of chitin. Chitosanase may be crucial in the degradation of the deacetylated portion of chitin in the fungal cell wall. Chitoolisaccharides produced by the hydrolysis of partially N-acetylated chitosan are known to have many biological activities, including antibacterial activity, immune-enhancing effects, and elicitor activity. This chain is Endo-chitosanase (csn), found in Aspergillus oryzae (strain ATCC 42149 / RIB 40) (Yellow koji mold).